The sequence spans 2346 residues: Highly reducing polyketide synthase claI (2346 aa).

The 403-residue stretch at 10–412 (TPAIAVVGMA…GTNCHLIVED (403 aa)) folds into the Ketosynthase family 3 (KS3) domain. Residues cysteine 183, histidine 295, and histidine 335 each act as for beta-ketoacyl synthase activity in the active site. The malonyl-CoA:ACP transacylase (MAT) domain stretch occupies residues 530-842 (IFTGQGSQWP…EYFSALKRGE (313 aa)). The active-site For malonyltransferase activity is the serine 622. The tract at residues 912–1048 (HDLLGSKILG…GLIRTSEEDS (137 aa)) is N-terminal hotdog fold. Residues 912 to 1213 (HDLLGSKILG…INGLRFSSVD (302 aa)) are dehydratase (DH) domain. The PKS/mFAS DH domain maps to 912–1218 (HDLLGSKILG…FSSVDLGSVQ (307 aa)). Catalysis depends on histidine 944, which acts as the Proton acceptor; for dehydratase activity. A C-terminal hotdog fold region spans residues 1060–1218 (IHATPAQVWY…FSSVDLGSVQ (159 aa)). Catalysis depends on aspartate 1124, which acts as the Proton donor; for dehydratase activity. The interval 1633–1946 (GSLEALQWTQ…SARHIGKILI (314 aa)) is enoyl reductase (ER) domain. Residues 1972 to 2151 (TYLIVGGLRG…HSLDLGVVDA (180 aa)) are ketoreductase (KR) domain. A Carrier domain is found at 2258–2336 (SQLVEKAVTL…ALAEKMVSKV (79 aa)). Residue serine 2296 is modified to O-(pantetheine 4'-phosphoryl)serine.

Pantetheine 4'-phosphate is required as a cofactor.

The protein operates within secondary metabolite biosynthesis. Its function is as follows. Highly reducing polyketide synthase; part of the cla gene cluster that produces clavatol and ortho-quinone methide. The clavatol biosynthesis cluster cla and the terrestric acid cluster tra are both involved in the production of peniphenones and penilactones. The non-reducing PKS claF is responsible for the formation of clavatol from successive condensations of 3 malonyl-CoA units, presumably with a simple acetyl-CoA starter unit, and 2 methylation steps. The esterase claE probably collaborates with claF by catalyzing the hydrolysis of ACP-bound acyl intermediates to free the ACP from stalled intermediates. The clavatol oxidase claD then converts clavatol to hydroxyclavatol. Spontaneous dehydration of hydroxyclavatol leads to the accumulation of the highly active ortho-quinone methide. On the other hand, the PKS-NRPS hybrid traA is involved in the formation of crustosic acid, with the help of traB and traD. The polyketide synthase module (PKS) of traA is responsible for the synthesis of the polyketide backbone via the condensation of an acetyl-CoA starter unit with 3 malonyl-CoA units. The downstream nonribosomal peptide synthetase (NRPS) module then amidates the carboxyl end of the polyketide with L-malic acid. Because traA lacks a designated enoylreductase (ER) domain, the required activity is provided the enoyl reductase traG. Crustosic acid undergoes decarboxylation and isomerization to the terrestric acid, catalyzed by the 2-oxoglutarate-dependent dioxygenase traH. Both acids are further converted to the 2 gamma-butyrolactones (R)-5-methyltetronic acid and (S)-5-carboxylmethyltetronic acid, with involvement of the cytochrome P450 monooxygenase claJ. Spontaneous addition of the methide to these gamma-butyrolactones leads to peniphenone D and penilactone D, which undergo again stereospecific attacking by methide to give penilactones A and B. The function of the highly reducing polyketide synthase claI has not been investigated yet. The sequence is that of Highly reducing polyketide synthase claI from Penicillium crustosum (Blue mold fungus).